Reading from the N-terminus, the 56-residue chain is Small ribosomal subunit protein uS14 (56 aa).

The protein belongs to the universal ribosomal protein uS14 family. As to quaternary structure, component of the small ribosomal subunit (SSU). Mature yeast ribosomes consist of a small (40S) and a large (60S) subunit. The 40S small subunit contains 1 molecule of ribosomal RNA (18S rRNA) and at least 33 different proteins. The large 60S subunit contains 3 rRNA molecules (25S, 5.8S and 5S rRNA) and at least 46 different proteins.

It localises to the cytoplasm. Its subcellular location is the nucleus. In terms of biological role, component of the ribosome, a large ribonucleoprotein complex responsible for the synthesis of proteins in the cell. The small ribosomal subunit (SSU) binds messenger RNAs (mRNAs) and translates the encoded message by selecting cognate aminoacyl-transfer RNA (tRNA) molecules. The large subunit (LSU) contains the ribosomal catalytic site termed the peptidyl transferase center (PTC), which catalyzes the formation of peptide bonds, thereby polymerizing the amino acids delivered by tRNAs into a polypeptide chain. The nascent polypeptides leave the ribosome through a tunnel in the LSU and interact with protein factors that function in enzymatic processing, targeting, and the membrane insertion of nascent chains at the exit of the ribosomal tunnel. The sequence is that of Small ribosomal subunit protein uS14 (rps29) from Schizosaccharomyces pombe (strain 972 / ATCC 24843) (Fission yeast).